The sequence spans 367 residues: Nuclear hormone receptor-like 1 (367 aa).

The nuclear receptor DNA-binding region spans 32-107 (GQPCVVCGDD…NGMTKSLVLN (76 aa)). NR C4-type zinc fingers lie at residues 35–55 (CVVCGDDATGLHYRAITCEGC) and 71–95 (CKSIERCEISKISRNICQFCRFQKC). Residues 145–367 (EFQSRIDQVT…IANILLFKFT (223 aa)) form the NR LBD domain.

This sequence belongs to the nuclear hormone receptor family.

It is found in the nucleus. This chain is Nuclear hormone receptor-like 1 (nhr-1), found in Onchocerca volvulus.